Reading from the N-terminus, the 145-residue chain is Lysozyme-like protein 4 (145 aa).

A signal peptide spans 1–19 (MQLYLVLLLISYLLTPIGA). The C-type lysozyme domain maps to 20 to 145 (SILGRCVVAK…LDRWLDGCEL (126 aa)). Cystine bridges form between cysteine 25–cysteine 143, cysteine 49–cysteine 130, cysteine 84–cysteine 95, and cysteine 91–cysteine 109. Residue glutamate 54 is part of the active site.

The protein belongs to the glycosyl hydrolase 22 family. In terms of assembly, monomer. As to expression, expressed in the brain, lung, ovary, uterus and testis. In testis expressed in the germinal epithelium and on the maturing spermatozoa (at protein level).

Its subcellular location is the secreted. The protein resides in the cytoplasmic vesicle. It is found in the secretory vesicle. It localises to the acrosome. The protein localises to the cell projection. Its subcellular location is the cilium. The protein resides in the flagellum. Functionally, may be involved in fertilization. Has no detectable bacteriolytic and lysozyme activities in vitro. This chain is Lysozyme-like protein 4 (Lyzl4), found in Rattus norvegicus (Rat).